Reading from the N-terminus, the 141-residue chain is uncharacterized protein (141 aa).

Helical transmembrane passes span 64-84 (IAAV…IEAI) and 112-132 (IVGS…LVLI).

It localises to the cell membrane. This is an uncharacterized protein from Sinorhizobium fredii (strain NBRC 101917 / NGR234).